We begin with the raw amino-acid sequence, 68 residues long: Cx9C motif-containing protein 4 (68 aa).

Positions 4-46 (KDPCQKQACEIQKCLQANNYLESKCQAVIQELRKCCARYPKGR) constitute a CHCH domain. 2 short sequence motifs (cx9C motif) span residues 7–17 (CQKQACEIQKC) and 28–38 (CQAVIQELRKC). 3 disulfides stabilise this stretch: Cys-7-Cys-38, Cys-17-Cys-28, and Cys-39-Cys-50.

This sequence belongs to the CMC4 family. In terms of tissue distribution, expressed in many tissues.

It localises to the mitochondrion. This chain is Cx9C motif-containing protein 4 (Cmc4), found in Mus musculus (Mouse).